Consider the following 369-residue polypeptide: Protein RecA (369 aa).

Basic and acidic residues predominate over residues 1–10; that stretch reads MARTTDDSKK. Residues 1 to 20 are disordered; that stretch reads MARTTDDSKKAAPAAGTADE. ATP is bound at residue 82 to 89; that stretch reads GPESSGKT. Positions 350–369 are disordered; the sequence is PAAAVAAPDEGDDDLGDEEV. Positions 358-369 are enriched in acidic residues; that stretch reads DEGDDDLGDEEV.

The protein belongs to the RecA family.

The protein resides in the cytoplasm. Functionally, can catalyze the hydrolysis of ATP in the presence of single-stranded DNA, the ATP-dependent uptake of single-stranded DNA by duplex DNA, and the ATP-dependent hybridization of homologous single-stranded DNAs. It interacts with LexA causing its activation and leading to its autocatalytic cleavage. This Gloeobacter violaceus (strain ATCC 29082 / PCC 7421) protein is Protein RecA.